A 348-amino-acid chain; its full sequence is Protein RecA (348 aa).

An ATP-binding site is contributed by 66–73; it reads GPESSGKT.

The protein belongs to the RecA family.

The protein localises to the cytoplasm. Its function is as follows. Can catalyze the hydrolysis of ATP in the presence of single-stranded DNA, the ATP-dependent uptake of single-stranded DNA by duplex DNA, and the ATP-dependent hybridization of homologous single-stranded DNAs. It interacts with LexA causing its activation and leading to its autocatalytic cleavage. This chain is Protein RecA, found in Neisseria meningitidis serogroup C / serotype 2a (strain ATCC 700532 / DSM 15464 / FAM18).